The following is a 77-amino-acid chain: Translation initiation factor IF-1, chloroplastic (77 aa).

The S1-like domain occupies 1–71 (MKEQKLIHEG…TKGRIIYRLR (71 aa)).

This sequence belongs to the IF-1 family. In terms of assembly, component of the 30S ribosomal translation pre-initiation complex which assembles on the 30S ribosome in the order IF-2 and IF-3, IF-1 and N-formylmethionyl-tRNA(fMet); mRNA recruitment can occur at any time during PIC assembly.

Its subcellular location is the plastid. It localises to the chloroplast. Functionally, one of the essential components for the initiation of protein synthesis. Stabilizes the binding of IF-2 and IF-3 on the 30S subunit to which N-formylmethionyl-tRNA(fMet) subsequently binds. Helps modulate mRNA selection, yielding the 30S pre-initiation complex (PIC). Upon addition of the 50S ribosomal subunit IF-1, IF-2 and IF-3 are released leaving the mature 70S translation initiation complex. In Dioscorea elephantipes (Elephant's foot yam), this protein is Translation initiation factor IF-1, chloroplastic.